The following is a 173-amino-acid chain: Disulfide bond formation protein B (173 aa).

The Cytoplasmic segment spans residues 1–11 (MNALQWSFRAQ). The chain crosses the membrane as a helical span at residues 12–28 (CLTGFLFCTGLLAYAIF). At 29–46 (LQLHQGLEPCPLCIFQRI) the chain is on the periplasmic side. A disulfide bridge links C38 with C41. A helical membrane pass occupies residues 47–63 (AFAVLGILFLIAGLYNS). The Cytoplasmic portion of the chain corresponds to 64–70 (SNVYTRK). A helical membrane pass occupies residues 71–88 (AYGLLIFLTAIIGTGIAG). Residues 89–145 (RHVWVQLMPHNTISSCGSPLSFLSETMGPFEVFRTVLTGTSNCGNIDWRFLGLSMPM) lie on the Periplasmic side of the membrane. C104 and C131 are oxidised to a cystine. A helical membrane pass occupies residues 146-164 (WSMFWFVALALLGLLVGFK). At 165–173 (AERRKPLFS) the chain is on the cytoplasmic side.

It belongs to the DsbB family.

The protein resides in the cell inner membrane. Required for disulfide bond formation in some periplasmic proteins. Acts by oxidizing the DsbA protein. This Xylella fastidiosa (strain Temecula1 / ATCC 700964) protein is Disulfide bond formation protein B.